The primary structure comprises 211 residues: High mobility group protein B1-like 1 (211 aa).

Lysine 3, lysine 7, lysine 8, lysine 12, lysine 28, lysine 29, and lysine 30 each carry N6-acetyllysine. Positions 9-79 (PRGKMSSYAF…HYERQMKTYI (71 aa)) form a DNA-binding region, HMG box 1. The interval 71 to 96 (YERQMKTYIPPKGETKKKFKDPNAPK) is disordered. Basic and acidic residues predominate over residues 83-94 (GETKKKFKDPNA). The segment at residues 95–163 (PKRPPSAFFL…KYEKDIAAYQ (69 aa)) is a DNA-binding region (HMG box 2). N6-acetyllysine occurs at positions 127, 128, 172, 173, 177, 180, 182, 183, 184, and 185. The tract at residues 161–211 (AYQAKGKPEAAKKGVVKAEKSKKKKEEEEDEEDEEDEEEEDEEDEEDDDDE) is disordered. Over residues 166–179 (GKPEAAKKGVVKAE) the composition is skewed to basic and acidic residues. Over residues 187 to 211 (EEEDEEDEEDEEEEDEEDEEDDDDE) the composition is skewed to acidic residues.

It belongs to the HMGB family.

It is found in the nucleus. The protein localises to the chromosome. Its function is as follows. Binds preferentially single-stranded DNA and unwinds double-stranded DNA. This chain is High mobility group protein B1-like 1 (HMGB1P1), found in Homo sapiens (Human).